Consider the following 551-residue polypeptide: Structure-specific endonuclease subunit MUS81 (551 aa).

Disordered regions lie at residues 84 to 131 (HLAS…VGYW) and 229 to 259 (FRPE…QQRP). Residues 92-107 (APSSPSGKKGASKGPP) are compositionally biased toward low complexity. Residue S95 is modified to Phosphoserine. A compositionally biased stretch (polar residues) spans 110-131 (VQDSSMPVPTQPQAGSTSVGYW). Residues 124-244 (GSTSVGYWPA…HGEDSAVPEA (121 aa)) are interaction with BLM. Residues 131 to 230 (WPAQNSGARE…GLSTRHAGFR (100 aa)) form a winged helix domain (WHD); critical for endonuclease activity region. Residues 229–238 (FRPEEHHGED) are compositionally biased toward basic and acidic residues. Residues 270-372 (LLCVDIGETR…HRVYLVEEHG (103 aa)) enclose the ERCC4 domain. Active-site residues include D274, E277, and D307. Mg(2+) contacts are provided by D274, E277, D307, E333, and R334. A helix-hairpin-helix (2HhH); involved in DNA recognition and bending region spans residues 471–545 (VREVFARQLM…LSRTLYQLYC (75 aa)).

The protein belongs to the XPF family. In terms of assembly, part of the heterodimeric DNA structure-specific endonuclease complex MUS81-EME1. Part of the heterodimeric DNA structure-specific endonuclease complex MUS81-EME2. Interacts with BLM; may stimulate the endonuclease activity of MUS81. Interacts with SLX4/BTBD12; this interaction is direct and links the MUS81-EME1 complex to SLX4, which may coordinate the action of the structure-specific endonuclease during DNA repair. Interacts with DCLRE1B/Apollo. Interacts with RECQL5; this interaction stimulates mitotic DNA synthesis. Interacts with CHEK2. Mg(2+) serves as cofactor. Expressed highly in testis. Expressed also in bone marrow, brain, thymus and to a lesser extent in heart and skeletal muscle, colon, kidney and spleen.

The protein resides in the nucleus. The protein localises to the nucleolus. In terms of biological role, catalytic subunit of two functionally distinct, structure-specific, heterodimeric DNA endonucleases MUS81-EME1 and MUS81-EME2 that are involved in the maintenance of genome stability. Both endonucleases have essentially the same substrate specificity though MUS81-EME2 is more active than its MUS81-EME1 counterpart. Both cleave 3'-flaps and nicked Holliday junctions, and exhibit limited endonuclease activity with 5' flaps and nicked double-stranded DNAs. MUS81-EME2 which is active during the replication of DNA is more specifically involved in replication fork processing. Replication forks frequently encounter obstacles to their passage, including DNA base lesions, DNA interstrand cross-links, difficult-to-replicate sequences, transcription bubbles, or tightly bound proteins. One mechanism for the restart of a stalled replication fork involves nucleolytic cleavage mediated by the MUS81-EME2 endonuclease. By acting upon the stalled fork, MUS81-EME2 generates a DNA double-strand break (DSB) that can be repaired by homologous recombination, leading to the restoration of an active fork. MUS81-EME2 could also function in telomere maintenance. MUS81-EME1, on the other hand, is active later in the cell cycle and functions in the resolution of mitotic recombination intermediates including the Holliday junctions, the four-way DNA intermediates that form during homologous recombination. This Mus musculus (Mouse) protein is Structure-specific endonuclease subunit MUS81.